A 550-amino-acid chain; its full sequence is Hydroxylamine reductase (550 aa).

Positions 3, 6, 18, and 25 each coordinate [2Fe-2S] cluster. Hybrid [4Fe-2O-2S] cluster-binding residues include His-249, Glu-273, Cys-317, Cys-405, Cys-433, Cys-458, Glu-492, and Lys-494. Cys-405 is subject to Cysteine persulfide.

Belongs to the HCP family. [2Fe-2S] cluster serves as cofactor. Hybrid [4Fe-2O-2S] cluster is required as a cofactor.

It is found in the cytoplasm. It carries out the reaction A + NH4(+) + H2O = hydroxylamine + AH2 + H(+). In terms of biological role, catalyzes the reduction of hydroxylamine to form NH(3) and H(2)O. This chain is Hydroxylamine reductase, found in Escherichia coli O139:H28 (strain E24377A / ETEC).